Here is a 344-residue protein sequence, read N- to C-terminus: Arginine N-succinyltransferase (344 aa).

Residue L125 participates in succinyl-CoA binding. The active-site Proton donor is H229.

It belongs to the arginine N-succinyltransferase family.

The catalysed reaction is succinyl-CoA + L-arginine = N(2)-succinyl-L-arginine + CoA + H(+). It participates in amino-acid degradation; L-arginine degradation via AST pathway; L-glutamate and succinate from L-arginine: step 1/5. Functionally, catalyzes the transfer of succinyl-CoA to arginine to produce N(2)-succinylarginine. The sequence is that of Arginine N-succinyltransferase from Shigella flexneri.